The chain runs to 401 residues: Nodal homolog 3-B (401 aa).

A signal peptide spans Met-1–Ala-18. The propeptide occupies Met-19–Arg-274. 4 N-linked (GlcNAc...) asparagine glycosylation sites follow: Asn-168, Asn-337, Asn-341, and Asn-344. Cystine bridges form between Cys-299-Cys-365 and Cys-328-Cys-396.

The protein belongs to the TGF-beta family. Monomer. The propeptide region interacts with bmp4 in a non-covalent manner. In terms of tissue distribution, expressed in the dorsal marginal region of late blastula, becoming restricted to the dorsal blastopore lip (Spemann organizer) at the early gastrula stage.

It is found in the secreted. Functionally, exhibits mesoderm-dorsalizing activity and neural-inducing activity, but lacks mesoderm-inducing activity. Regulates the expression of specific mesodermal and neural genes. Induces convergent extension movements at the embryonic midline by activating the fgf signaling pathway to induce t/bra expression in the organizer region. Acts with wnt11 to induce Spemann organizer cells and induce axis formation. The unprocessed protein antagonizes bmp-signaling. In Xenopus laevis (African clawed frog), this protein is Nodal homolog 3-B (nodal3-b).